A 68-amino-acid chain; its full sequence is Protein SlyX homolog (68 aa).

Belongs to the SlyX family.

This chain is Protein SlyX homolog, found in Brucella suis (strain ATCC 23445 / NCTC 10510).